Reading from the N-terminus, the 1318-residue chain is 1-phosphatidylinositol 4,5-bisphosphate phosphodiesterase classes I and II (1318 aa).

Positions 318-466 (DDMDQPMSHY…LRRKIIIKNK (149 aa)) constitute a PI-PLC X-box domain. Residues His333 and His378 contribute to the active site. Lys464 and Lys466 together coordinate substrate. Over residues 466 to 481 (KKKHHHHHHHHHHKKP) the composition is skewed to basic residues. 2 disordered regions span residues 466–489 (KKKH…TPAA) and 505–594 (QQVG…KETE). 2 stretches are compositionally biased toward low complexity: residues 528–543 (ATGT…AGHA) and 554–563 (KDSTGSSDSD). Residues 571-580 (LPNTTPNLPS) are compositionally biased toward polar residues. The segment covering 585 to 594 (PPEKAQKETE) has biased composition (basic and acidic residues). Positions 599–715 (ISALVNYVQP…GYLLKPEFMR (117 aa)) constitute a PI-PLC Y-box domain. 2 residues coordinate substrate: Ser628 and Arg655. In terms of domain architecture, C2 spans 715–843 (RRSDRRLDPF…NLRSEVGQPI (129 aa)). Disordered regions lie at residues 1080–1112 (LDLG…TQES) and 1296–1318 (GSHS…EMKT). Low complexity predominate over residues 1088–1107 (ESAAADAGEDLAGGSSSLDG).

As to expression, expressed in neuronal cell bodies of the optic lobe, central brain, and thoracic ganglia in adults, and the brain of larvae.

The enzyme catalyses a 1,2-diacyl-sn-glycero-3-phospho-(1D-myo-inositol-4,5-bisphosphate) + H2O = 1D-myo-inositol 1,4,5-trisphosphate + a 1,2-diacyl-sn-glycerol + H(+). Functionally, the production of the second messenger molecules diacylglycerol (DAG) and inositol 1,4,5-trisphosphate (IP3) is mediated by activated phosphatidylinositol-specific phospholipase C enzymes. This is 1-phosphatidylinositol 4,5-bisphosphate phosphodiesterase classes I and II (Plc21C) from Drosophila melanogaster (Fruit fly).